The sequence spans 533 residues: Flavin-containing monooxygenase 5 (533 aa).

Dimethylated arginine is present on R5. Residues 10-14 (GGGVS), E33, and 41-42 (LW) contribute to the FAD site. S54 is modified (phosphoserine). Y56 carries the post-translational modification Phosphotyrosine. S58 is subject to Phosphoserine. 62–63 (NT) is a binding site for FAD. An NADP(+)-binding site is contributed by 196–199 (SGGD). Residue S280 is modified to Phosphoserine. Residue T284 is modified to Phosphothreonine. S401 bears the Phosphoserine mark. The helical transmembrane segment at 510-530 (MVSAVTTGCFMLAVVFFAIIM) threads the bilayer.

It belongs to the FMO family. Requires FAD as cofactor. In terms of tissue distribution, expressed in liver.

The protein resides in the microsome membrane. The protein localises to the endoplasmic reticulum membrane. It carries out the reaction N,N-dimethylaniline + NADPH + O2 + H(+) = N,N-dimethylaniline N-oxide + NADP(+) + H2O. The catalysed reaction is NADPH + O2 + H(+) = H2O2 + NADP(+). The enzyme catalyses heptan-2-one + NADPH + O2 + H(+) = pentyl acetate + NADP(+) + H2O. It catalyses the reaction octan-3-one + NADPH + O2 + H(+) = pentyl propanoate + NADP(+) + H2O. It carries out the reaction octan-3-one + NADPH + O2 + H(+) = ethyl hexanoate + NADP(+) + H2O. The catalysed reaction is hexan-3-one + NADPH + O2 + H(+) = ethyl butanoate + NADP(+) + H2O. The enzyme catalyses hexan-3-one + NADPH + O2 + H(+) = propyl propanoate + NADP(+) + H2O. It catalyses the reaction heptan-4-one + NADPH + O2 + H(+) = propyl butanoate + NADP(+) + H2O. It carries out the reaction (2E)-geranial + NADPH + O2 + H(+) = (1E)-2,6-dimethylhepta-1,5-dien-1-yl formate + NADP(+) + H2O. The catalysed reaction is sulcatone + NADPH + O2 + H(+) = 4-methylpent-3-en-1-yl acetate + NADP(+) + H2O. In terms of biological role, acts as a Baeyer-Villiger monooxygenase on a broad range of substrates. Catalyzes the insertion of an oxygen atom into a carbon-carbon bond adjacent to a carbonyl, which converts ketones to esters. Active on diverse carbonyl compounds, whereas soft nucleophiles are mostly non- or poorly reactive. In contrast with other forms of FMO it is non- or poorly active on 'classical' substrates such as drugs, pesticides, and dietary components containing soft nucleophilic heteroatoms. Able to oxidize drug molecules bearing a carbonyl group on an aliphatic chain, such as nabumetone and pentoxifylline. Also, in the absence of substrates, shows slow but yet significant NADPH oxidase activity. Acts as a positive modulator of cholesterol biosynthesis as well as glucose homeostasis, promoting metabolic aging via pleiotropic effects. The sequence is that of Flavin-containing monooxygenase 5 (FMO5) from Cavia porcellus (Guinea pig).